Consider the following 90-residue polypeptide: Small ribosomal subunit protein bS6 (90 aa).

Residue K33 forms an Isoglutamyl lysine isopeptide (Lys-Gln) (interchain with Q-Cter in protein Pup) linkage.

It belongs to the bacterial ribosomal protein bS6 family.

Its function is as follows. Binds together with bS18 to 16S ribosomal RNA. The sequence is that of Small ribosomal subunit protein bS6 (rpsF) from Mycolicibacterium smegmatis (strain ATCC 700084 / mc(2)155) (Mycobacterium smegmatis).